The sequence spans 326 residues: Chitinase 12 (326 aa).

An N-terminal signal peptide occupies residues 1–21 (MRALAVVAMVATAFLAAAVHA). One can recognise a Chitin-binding type-1 domain in the interval 22–62 (EQCGSQAGGAVCPNCLCCSQFGWCGSTSDYCGAGCQSQCSA). Intrachain disulfides connect Cys24-Cys39, Cys33-Cys45, Cys36-Cys65, Cys38-Cys52, Cys56-Cys60, Cys102-Cys165, Cys179-Cys187, and Cys286-Cys318. The active-site Proton donor is Glu147.

This sequence belongs to the glycosyl hydrolase 19 family. Chitinase class I subfamily. In terms of tissue distribution, expressed in meristems and at lower levels in roots and sheaths.

It carries out the reaction Random endo-hydrolysis of N-acetyl-beta-D-glucosaminide (1-&gt;4)-beta-linkages in chitin and chitodextrins.. Functionally, hydrolyzes chitin and plays a role in defense against fungal pathogens containing chitin. Its overexpression confers enhanced resistance to sheath blight pathogen (R.solani). This is Chitinase 12 (Cht12) from Oryza sativa subsp. japonica (Rice).